The sequence spans 81 residues: Cytochrome b559 subunit alpha (81 aa).

The helical transmembrane segment at 21-35 (IIHSITIPMLFIAGW) threads the bilayer. H23 serves as a coordination point for heme.

The protein belongs to the PsbE/PsbF family. As to quaternary structure, heterodimer of an alpha subunit and a beta subunit. PSII is composed of 1 copy each of membrane proteins PsbA, PsbB, PsbC, PsbD, PsbE, PsbF, PsbH, PsbI, PsbJ, PsbK, PsbL, PsbM, PsbT, PsbX, PsbY, PsbZ, Psb30/Ycf12, peripheral proteins PsbO, CyanoQ (PsbQ), PsbU, PsbV and a large number of cofactors. It forms dimeric complexes. Heme b serves as cofactor.

It localises to the cellular thylakoid membrane. Functionally, this b-type cytochrome is tightly associated with the reaction center of photosystem II (PSII). PSII is a light-driven water:plastoquinone oxidoreductase that uses light energy to abstract electrons from H(2)O, generating O(2) and a proton gradient subsequently used for ATP formation. It consists of a core antenna complex that captures photons, and an electron transfer chain that converts photonic excitation into a charge separation. The polypeptide is Cytochrome b559 subunit alpha (Microcystis aeruginosa (strain NIES-843 / IAM M-2473)).